The primary structure comprises 92 residues: Endoribonuclease HigB (92 aa).

Residue histidine 92 is part of the active site.

As to quaternary structure, forms a complex with the antitoxin HigA which inhibits the mRNA interferase activity. The heterodimer dimerizes to form a HigB-(HigA)2-HigB tetramer that is able to bind to the DNA.

Toxic component of a type II toxin-antitoxin (TA) system. A ribosome-associated translation-dependent mRNA interferase. Inhibits translation by sequence-specific cleavage of mRNA. Prefers either in-frame or out-of-frame 5'-AAA-3' codons (lysine). Also cleaves the first three AAAs of stretches of four or more A sequences. 20% of codons containing AA are cleaved and occassionally cuts even at a single A. In Proteus vulgaris, this protein is Endoribonuclease HigB.